Here is a 359-residue protein sequence, read N- to C-terminus: E2F transcription factor-like E2FD (359 aa).

2 consecutive DNA-binding regions follow at residues 13-78 (RKDK…SWKG) and 138-217 (RKER…RWLG). Disordered stretches follow at residues 255 to 274 (RNKSGCSKEDSKRNGNQNTS) and 288 to 313 (DVKNFASGSSTPAGTSESNDMGNNIR). Over residues 293 to 309 (ASGSSTPAGTSESNDMG) the composition is skewed to polar residues.

It belongs to the E2F/DP family. Monomer. No interactions with DPA or E2FA. Preferentially expressed in proliferating tissues. Highly expressed in young stalk and young flowers. Lower expression in young leaves and mature flowers. Detected in cotyledonary vascular tissues, the shoot apical meristem, the base of trichomes, the fully developed stomata, the central root cylinder and in the columella of lateral roots but not in the primary root tips or in the leaf epidermal cells.

The protein localises to the nucleus. Functionally, inhibitor of E2F-dependent regulation of gene expression. Binds specifically the E2 recognition site as a monomer without interacting with DP proteins. May be up-regulating E2FA and down-regulating repressors of cell cycle progression. Promotes cell proliferation and represses cell elongation. Regulated by proteolysis via a ubiquitin-proteasome pathway. This Arabidopsis thaliana (Mouse-ear cress) protein is E2F transcription factor-like E2FD (E2FD).